The primary structure comprises 1138 residues: 2'-5'-oligoadenylate synthase 3 (1138 aa).

At Met-1 the chain carries N-acetylmethionine. An OAS domain 1 region spans residues 6–341; that stretch reads TPAGALDKLV…GVLVQPWEGP (336 aa). 2 interaction with dsRNA regions span residues 12–56 and 185–199; these read DKLV…VIRI and EPRK…AKLK. Positions 342 to 462 are linker; sequence GLPRAGILDL…GSRMSPDLSQ (121 aa). Residues 370–379 show a composition bias toward basic and acidic residues; that stretch reads LAVQSKERSQ. Disordered regions lie at residues 370–403 and 434–459; these read LAVQ…NPSA and TQST…MSPD. Residues 447 to 459 are compositionally biased toward polar residues; sequence SSISTAGSRMSPD. 2 OAS domain regions span residues 463 to 793 and 801 to 1135; these read IPSK…PWDV and TLAE…WPVK. Ser-855 is a binding site for ATP. Mg(2+)-binding residues include Asp-867, Asp-869, and Asp-939. The ATP site is built by Arg-998, Lys-1001, and Gln-1020.

Belongs to the 2-5A synthase family. As to quaternary structure, monomer. It depends on Mg(2+) as a cofactor. As to expression, intestine.

The protein resides in the cytoplasm. It localises to the nucleus. The enzyme catalyses 3 ATP = 5'-triphosphoadenylyl-(2'-&gt;5')-adenylyl-(2'-&gt;5')-adenosine + 2 diphosphate. Produced as a latent enzyme which is activated by dsRNA generated during the course of viral infection. Strongly activated by long dsRNAs at least 50 nucleotides in length. ssRNA does not activate the enzyme. Its function is as follows. Interferon-induced, dsRNA-activated antiviral enzyme which plays a critical role in cellular innate antiviral response. In addition, it may also play a role in other cellular processes such as apoptosis, cell growth, differentiation and gene regulation. Synthesizes preferentially dimers of 2'-5'-oligoadenylates (2-5A) from ATP which then bind to the inactive monomeric form of ribonuclease L (RNase L) leading to its dimerization and subsequent activation. Activation of RNase L leads to degradation of cellular as well as viral RNA, resulting in the inhibition of protein synthesis, thus terminating viral replication. Can mediate the antiviral effect via the classical RNase L-dependent pathway or an alternative antiviral pathway independent of RNase L. The chain is 2'-5'-oligoadenylate synthase 3 (Oas3) from Mus musculus (Mouse).